Consider the following 180-residue polypeptide: MKLDKYAVGQRYAKALFSLAEQEQQFESIHDEIQALETIFNDNPKLGTVLTDTTLSGLKQRNLLESLSNDFSTLMQHFLSLVFDYQRMAEMPYIIAAYEDLYDQHKGIAHAKVTSAVALDDDQLAKISQSFAKREGLNEVLIESVVDPDIIGGIVLESNHKVIDGSVKHGLDQIKSLLLK.

This sequence belongs to the ATPase delta chain family. In terms of assembly, F-type ATPases have 2 components, F(1) - the catalytic core - and F(0) - the membrane proton channel. F(1) has five subunits: alpha(3), beta(3), gamma(1), delta(1), epsilon(1). F(0) has three main subunits: a(1), b(2) and c(10-14). The alpha and beta chains form an alternating ring which encloses part of the gamma chain. F(1) is attached to F(0) by a central stalk formed by the gamma and epsilon chains, while a peripheral stalk is formed by the delta and b chains.

The protein localises to the cell membrane. In terms of biological role, f(1)F(0) ATP synthase produces ATP from ADP in the presence of a proton or sodium gradient. F-type ATPases consist of two structural domains, F(1) containing the extramembraneous catalytic core and F(0) containing the membrane proton channel, linked together by a central stalk and a peripheral stalk. During catalysis, ATP synthesis in the catalytic domain of F(1) is coupled via a rotary mechanism of the central stalk subunits to proton translocation. This protein is part of the stalk that links CF(0) to CF(1). It either transmits conformational changes from CF(0) to CF(1) or is implicated in proton conduction. The chain is ATP synthase subunit delta from Latilactobacillus sakei subsp. sakei (strain 23K) (Lactobacillus sakei subsp. sakei).